A 533-amino-acid polypeptide reads, in one-letter code: Trigger factor (533 aa).

The 86-residue stretch at 164–249 folds into the PPIase FKBP-type domain; the sequence is GDQLIIDFTG…VKQVKVETDT (86 aa). The tract at residues 436–533 is disordered; the sequence is EAAIEAEAEE…APAKKPAAKK (98 aa). Residues 465-477 are compositionally biased toward basic residues; that stretch reads AAAKKAPAKKAPA. Basic and acidic residues predominate over residues 481 to 490; that stretch reads AAKDGDEKPA. Basic residues-rich tracts occupy residues 494–506 and 515–533; these read APAK…KAST and PAKK…AAKK.

The protein belongs to the FKBP-type PPIase family. Tig subfamily.

Its subcellular location is the cytoplasm. It catalyses the reaction [protein]-peptidylproline (omega=180) = [protein]-peptidylproline (omega=0). In terms of biological role, involved in protein export. Acts as a chaperone by maintaining the newly synthesized protein in an open conformation. Functions as a peptidyl-prolyl cis-trans isomerase. The chain is Trigger factor from Erythrobacter litoralis (strain HTCC2594).